The chain runs to 184 residues: Glutathione-regulated potassium-efflux system ancillary protein KefG (184 aa).

Belongs to the NAD(P)H dehydrogenase (quinone) family. KefG subfamily. In terms of assembly, interacts with KefB.

The protein resides in the cell inner membrane. It carries out the reaction a quinone + NADH + H(+) = a quinol + NAD(+). It catalyses the reaction a quinone + NADPH + H(+) = a quinol + NADP(+). Functionally, regulatory subunit of a potassium efflux system that confers protection against electrophiles. Required for full activity of KefB. The protein is Glutathione-regulated potassium-efflux system ancillary protein KefG of Shigella dysenteriae serotype 1 (strain Sd197).